Reading from the N-terminus, the 98-residue chain is Transcription elongation factor A protein-like 7 (98 aa).

The span at 1 to 22 (MQKSCNEKEGKPKGSEAKREDE) shows a compositional bias: basic and acidic residues. Residues 1-33 (MQKSCNEKEGKPKGSEAKREDEQPCGALEGQRL) form a disordered region. Residues 59-89 (GEEMTGEEEEMERCLEEIRSLRKKFRALHSN) are a coiled coil.

Belongs to the TFS-II family. TFA subfamily.

Its subcellular location is the nucleus. Functionally, plays a role in the negative regulation of NF-kappa-B signaling at the basal level by modulating transcriptional activity of NF-kappa-B on its target gene promoters. Associates with cyclin D1 promoter containing Myc E-box sequence and transcriptionally represses cyclin D1 expression. Regulates telomerase reverse transcriptase expression and telomerase activity in both ALT (alternative lengthening of telomeres)and telomerase-positive cell lines. In Mus musculus (Mouse), this protein is Transcription elongation factor A protein-like 7 (Tceal7).